Here is a 201-residue protein sequence, read N- to C-terminus: Glycerol-3-phosphate acyltransferase (201 aa).

Helical transmembrane passes span 5-25, 55-75, 88-108, 118-138, and 164-184; these read LLGA…FGVV, KMGV…ILVA, WVTA…WLGF, LGIF…GYAV, and TYGP…LIFL.

This sequence belongs to the PlsY family. In terms of assembly, probably interacts with PlsX.

Its subcellular location is the cell inner membrane. It catalyses the reaction an acyl phosphate + sn-glycerol 3-phosphate = a 1-acyl-sn-glycero-3-phosphate + phosphate. The protein operates within lipid metabolism; phospholipid metabolism. Functionally, catalyzes the transfer of an acyl group from acyl-phosphate (acyl-PO(4)) to glycerol-3-phosphate (G3P) to form lysophosphatidic acid (LPA). This enzyme utilizes acyl-phosphate as fatty acyl donor, but not acyl-CoA or acyl-ACP. The sequence is that of Glycerol-3-phosphate acyltransferase from Anaeromyxobacter sp. (strain K).